Reading from the N-terminus, the 592-residue chain is AT-rich interactive domain-containing protein 5A (592 aa).

The disordered stretch occupies residues 1–53 (MAPPVKGKRKQSEEGEPLDPPVSPQPDGEPRSRSPVRLEEPPEAGREREEEQE). The segment at 1–299 (MAPPVKGKRK…AAPPLESPQS (299 aa)) is interaction with SOX9. A Phosphoserine modification is found at S23. Over residues 28 to 49 (GEPRSRSPVRLEEPPEAGRERE) the composition is skewed to basic and acidic residues. The 93-residue stretch at 52-144 (QEEEQAFLVS…LVLPYVRHLK (93 aa)) folds into the ARID domain. Residues K82 and K91 each participate in a glycyl lysine isopeptide (Lys-Gly) (interchain with G-Cter in ubiquitin) cross-link. Residues 143 to 225 (LKGEDDKPLP…RGPAAGPSLP (83 aa)) form a disordered region. A compositionally biased stretch (basic and acidic residues) spans 162-186 (MAKEPRGDDGATERPKKVKEEKRVD). S253 carries the post-translational modification Phosphoserine. Residues 277–333 (CRHGAGGEPQAPPAAPPLESPQSPGGPAEDSRHRLTPLEGRQAPGGGLWGETQAGPR) are disordered. Residues 286–295 (QAPPAAPPLE) are compositionally biased toward pro residues. 2 positions are modified to phosphoserine: S438 and S463.

As to quaternary structure, interacts with SOX9. Interacts with ESR1. Interacts with RORC. In terms of processing, phosphorylated by MAPK14 on serine residues involving a TLR4 signaling pathway upon lipopolysaccharide (LPS) stimulation leading to its ubiquitination and proteasomal degradation. Post-translationally, ubiquitinated leading to proteasomal degradation; involving WWP1 linked to MAPK14-mediated phosphorylation upon LPS stimulation.

It is found in the nucleus. DNA-binding protein that may regulate transcription and act as a repressor by binding to AT-rich stretches in the promoter region of target genes. May act as repressor and down-regulate enhancer-dependent gene expressison. May positively regulate chondrocyte-specific transcription such as of COL2A1 in collaboration with SOX9 and positively regulate histone H3 acetylation at chondrocyte-specific genes. May stimulate early-stage chondrocyte differentiation and inhibit later stage differention. Can repress ESR1-mediated transcriptional activation; proposed to act as corepressor for selective nuclear hormone receptors. As an RNA-binding protein, involved in the regulation of inflammatory response by stabilizing selective inflammation-related mRNAs, such as STAT3 and TBX21. Also stabilizes IL6 mRNA. Binds to stem loop structures located in the 3'UTRs of IL6, STAT3 and TBX21 mRNAs; at least for STAT3 prevents binding of ZC3H12A to the mRNA stem loop structure thus inhibiting its degradation activity. Contributes to elevated IL6 levels possibly implicated in autoimmunity processes. IL6-dependent stabilization of STAT3 mRNA may promote differentiation of naive CD4+ T-cells into T-helper Th17 cells. In CD4+ T-cells may also inhibit RORC-induced Th17 cell differentiation independently of IL6 signaling. Stabilization of TBX21 mRNA contributes to elevated interferon-gamma secretion in Th1 cells possibly implicated in the establishment of septic shock. Stabilizes TNFRSF4/OX40 mRNA by binding to the conserved stem loop structure in its 3'UTR; thereby competing with the mRNA-destabilizing functions of RC3H1 and endoribonuclease ZC3H12A. This Bos taurus (Bovine) protein is AT-rich interactive domain-containing protein 5A (ARID5A).